A 253-amino-acid chain; its full sequence is HTH-type transcriptional repressor DasR (253 aa).

The 71-residue stretch at 16–86 (RAQRVPKYYR…QGKGTFVAKP (71 aa)) folds into the HTH gntR-type domain. The H-T-H motif DNA-binding region spans 46-65 (ERTLAAEFDTSRTTVPQALQ).

The protein resides in the cytoplasm. In terms of biological role, global regulator that is part of the nutrient-sensing system. In the absence of glucosamine 6-P (GlcN6P), represses the phosphotransferase system (PTS) specific for the uptake of N-acetylglucosamine (PTSNag), and genes involved in the metabolism of chitin, as well as several genes involved in development, thereby linking carbon availability to morphogenesis. Regulates the dasABC transport operon involved in glucose-related morphogenesis. Essential for development. The sequence is that of HTH-type transcriptional repressor DasR (dasR) from Streptomyces griseus.